The chain runs to 247 residues: MNRTPLVAGNWKMNGRKDLLTEMADALAGYAGAAEVVICPPFPYLAAARSAMPGAVGIGSQNVSEQEDGAFTGEVSAPMLAEVGCGYVIIGHSERRALYGETDAQIASKFAHAQAAGLVPILCVGETLEERDSGNTDTIVCGQLRAVVDAVGVAAFANAIVAYEPVWAIGTGKTASPEQAQAVHACLRQFLAKDDPDIAQSLRLLYGGSVKADNAALLFAQSDIDGGLIGGASLTADSFIAICQAAE.

10–12 (NWK) contacts substrate. His92 acts as the Electrophile in catalysis. The active-site Proton acceptor is Glu164. Substrate contacts are provided by residues Gly170, Ser209, and 230–231 (GG).

It belongs to the triosephosphate isomerase family. In terms of assembly, homodimer.

The protein resides in the cytoplasm. It carries out the reaction D-glyceraldehyde 3-phosphate = dihydroxyacetone phosphate. Its pathway is carbohydrate biosynthesis; gluconeogenesis. It participates in carbohydrate degradation; glycolysis; D-glyceraldehyde 3-phosphate from glycerone phosphate: step 1/1. Functionally, involved in the gluconeogenesis. Catalyzes stereospecifically the conversion of dihydroxyacetone phosphate (DHAP) to D-glyceraldehyde-3-phosphate (G3P). The chain is Triosephosphate isomerase from Alcanivorax borkumensis (strain ATCC 700651 / DSM 11573 / NCIMB 13689 / SK2).